We begin with the raw amino-acid sequence, 326 residues long: Putative ankyrin repeat protein L25 (326 aa).

10 ANK repeats span residues 11-40 (RSEY…DLNV), 42-65 (KLFY…NIHV), 66-95 (DDEF…DIHV), 96-125 (NDDA…DIHA), 127-154 (NELV…DIHA), 155-184 (EDDE…NFRA), 185-214 (ENDY…DIHA), 216-244 (DEYA…DIHA), 246-274 (NDYG…NIHA), and 275-304 (KDDY…NIHA).

This is Putative ankyrin repeat protein L25 from Acanthamoeba polyphaga mimivirus (APMV).